The chain runs to 223 residues: 23 kDa piroplasm membrane protein (223 aa).

Residues 1–19 form the signal peptide; that stretch reads MHKFTKVFFVAILVHTLKS. The Extracellular segment spans residues 20 to 197; that stretch reads GLVFTPVSGT…EEEKSDKKKY (178 aa). The N-linked (GlcNAc...) asparagine glycan is linked to asparagine 69. A helical membrane pass occupies residues 198–218; the sequence is VLMVVVVVVFVVVASLVVFLV. The Cytoplasmic segment spans residues 219 to 223; it reads KFCLK.

The protein localises to the membrane. In Theileria buffeli, this protein is 23 kDa piroplasm membrane protein.